A 481-amino-acid polypeptide reads, in one-letter code: Cysteine--tRNA ligase (481 aa).

Zn(2+) is bound at residue cysteine 27. Residues 29–39 (PTVYNYAHIGN) carry the 'HIGH' region motif. Zn(2+)-binding residues include cysteine 222, histidine 247, and glutamate 251. The 'KMSKS' region signature appears at 279 to 283 (KMSKS). Lysine 282 contributes to the ATP binding site.

The protein belongs to the class-I aminoacyl-tRNA synthetase family. Monomer. Zn(2+) serves as cofactor.

It is found in the cytoplasm. The enzyme catalyses tRNA(Cys) + L-cysteine + ATP = L-cysteinyl-tRNA(Cys) + AMP + diphosphate. The protein is Cysteine--tRNA ligase of Borrelia turicatae (strain 91E135).